A 240-amino-acid polypeptide reads, in one-letter code: Phosphoribosylaminoimidazole-succinocarboxamide synthase (240 aa).

This sequence belongs to the SAICAR synthetase family.

The enzyme catalyses 5-amino-1-(5-phospho-D-ribosyl)imidazole-4-carboxylate + L-aspartate + ATP = (2S)-2-[5-amino-1-(5-phospho-beta-D-ribosyl)imidazole-4-carboxamido]succinate + ADP + phosphate + 2 H(+). The protein operates within purine metabolism; IMP biosynthesis via de novo pathway; 5-amino-1-(5-phospho-D-ribosyl)imidazole-4-carboxamide from 5-amino-1-(5-phospho-D-ribosyl)imidazole-4-carboxylate: step 1/2. The sequence is that of Phosphoribosylaminoimidazole-succinocarboxamide synthase from Wolbachia sp. subsp. Drosophila simulans (strain wRi).